Here is a 275-residue protein sequence, read N- to C-terminus: Probable ABC transporter permease protein NosY (275 aa).

Transmembrane regions (helical) follow at residues 20 to 40, 60 to 80, 111 to 131, 146 to 166, 179 to 199, and 250 to 270; these read WLLA…WFGA, SLAT…AIVG, ILAL…LALV, FMGS…ALSS, LGLW…ILVL, and ALWL…HGLF.

As to quaternary structure, the complex may be composed of an ATP-binding protein (NosF), a transmembrane protein (NosY) and a solute-binding protein (NosD).

Its subcellular location is the cell inner membrane. Functionally, required for the assembly of the copper chromophores of nitrous oxide reductase. Could be part of the ABC transporter complex NosDFY. This Pseudomonas aeruginosa (strain ATCC 15692 / DSM 22644 / CIP 104116 / JCM 14847 / LMG 12228 / 1C / PRS 101 / PAO1) protein is Probable ABC transporter permease protein NosY (nosY).